The chain runs to 448 residues: Probable glycine dehydrogenase (decarboxylating) subunit 1 (448 aa).

This sequence belongs to the GcvP family. N-terminal subunit subfamily. In terms of assembly, the glycine cleavage system is composed of four proteins: P, T, L and H. In this organism, the P 'protein' is a heterodimer of two subunits.

It catalyses the reaction N(6)-[(R)-lipoyl]-L-lysyl-[glycine-cleavage complex H protein] + glycine + H(+) = N(6)-[(R)-S(8)-aminomethyldihydrolipoyl]-L-lysyl-[glycine-cleavage complex H protein] + CO2. Functionally, the glycine cleavage system catalyzes the degradation of glycine. The P protein binds the alpha-amino group of glycine through its pyridoxal phosphate cofactor; CO(2) is released and the remaining methylamine moiety is then transferred to the lipoamide cofactor of the H protein. The protein is Probable glycine dehydrogenase (decarboxylating) subunit 1 of Anoxybacillus flavithermus (strain DSM 21510 / WK1).